The chain runs to 565 residues: Phospholipase B-like protein C (565 aa).

Positions 1 to 21 (MNKIIILISLFLNFLFGYVVC) are cleaved as a signal peptide. Asn53, Asn84, Asn118, Asn200, Asn201, Asn211, Asn266, Asn302, Asn406, and Asn485 each carry an N-linked (GlcNAc...) asparagine glycan.

This sequence belongs to the phospholipase B-like family.

It is found in the secreted. Functionally, probable phospholipase. The sequence is that of Phospholipase B-like protein C (plbC) from Dictyostelium discoideum (Social amoeba).